The chain runs to 224 residues: Phosphoribosylformylglycinamidine synthase subunit PurQ (224 aa).

The region spanning Thr2–Ala224 is the Glutamine amidotransferase type-1 domain. The active-site Nucleophile is Cys85. Active-site residues include His202 and Glu204.

As to quaternary structure, part of the FGAM synthase complex composed of 1 PurL, 1 PurQ and 2 PurS subunits.

The protein localises to the cytoplasm. It catalyses the reaction N(2)-formyl-N(1)-(5-phospho-beta-D-ribosyl)glycinamide + L-glutamine + ATP + H2O = 2-formamido-N(1)-(5-O-phospho-beta-D-ribosyl)acetamidine + L-glutamate + ADP + phosphate + H(+). The catalysed reaction is L-glutamine + H2O = L-glutamate + NH4(+). The protein operates within purine metabolism; IMP biosynthesis via de novo pathway; 5-amino-1-(5-phospho-D-ribosyl)imidazole from N(2)-formyl-N(1)-(5-phospho-D-ribosyl)glycinamide: step 1/2. Functionally, part of the phosphoribosylformylglycinamidine synthase complex involved in the purines biosynthetic pathway. Catalyzes the ATP-dependent conversion of formylglycinamide ribonucleotide (FGAR) and glutamine to yield formylglycinamidine ribonucleotide (FGAM) and glutamate. The FGAM synthase complex is composed of three subunits. PurQ produces an ammonia molecule by converting glutamine to glutamate. PurL transfers the ammonia molecule to FGAR to form FGAM in an ATP-dependent manner. PurS interacts with PurQ and PurL and is thought to assist in the transfer of the ammonia molecule from PurQ to PurL. The sequence is that of Phosphoribosylformylglycinamidine synthase subunit PurQ from Halobacterium salinarum (strain ATCC 700922 / JCM 11081 / NRC-1) (Halobacterium halobium).